Consider the following 197-residue polypeptide: Na(+)-translocating NADH-quinone reductase subunit E (197 aa).

6 consecutive transmembrane segments (helical) span residues 11–31 (SVFI…FLAV), 35–55 (VSTA…SVPV), 76–96 (FLKF…LEMF), 108–128 (LGIY…VSFM), 139–159 (VVYG…LAGI), and 175–195 (LGIT…FSGI).

The protein belongs to the NqrDE/RnfAE family. Composed of six subunits; NqrA, NqrB, NqrC, NqrD, NqrE and NqrF.

It localises to the cell inner membrane. It catalyses the reaction a ubiquinone + n Na(+)(in) + NADH + H(+) = a ubiquinol + n Na(+)(out) + NAD(+). In terms of biological role, NQR complex catalyzes the reduction of ubiquinone-1 to ubiquinol by two successive reactions, coupled with the transport of Na(+) ions from the cytoplasm to the periplasm. NqrA to NqrE are probably involved in the second step, the conversion of ubisemiquinone to ubiquinol. The polypeptide is Na(+)-translocating NADH-quinone reductase subunit E (Neisseria meningitidis serogroup B (strain ATCC BAA-335 / MC58)).